The primary structure comprises 364 residues: Protein L-Myc (364 aa).

Disordered stretches follow at residues T41 to G81, D111 to V172, and P219 to N285. Basic and acidic residues predominate over residues A228–E245. In terms of domain architecture, bHLH spans T281–L333. The segment at L333 to L361 is leucine-zipper.

In terms of assembly, efficient DNA binding requires dimerization with another bHLH protein. Binds DNA as a heterodimer with MAX.

The protein resides in the nucleus. The polypeptide is Protein L-Myc (MYCL) (Homo sapiens (Human)).